The chain runs to 230 residues: Intracellular hyphae protein 1 (230 aa).

The signal sequence occupies residues 1–18 (MQTSFVALLAVAASLASA). Positions 20-102 (PHGGNSYEAS…KNNTLPVPTC (83 aa)) are disordered. Tandem repeats lie at residues 30–33 (LPEP), 36–39 (LPEP), 42–45 (LPEP), 46–49 (VEGP), 50–53 (YKPK), 57–60 (LPEP), 65–68 (YKPK), 76–79 (VEGP), 80–83 (YKPK), and 84–87 (LPEP). Residues 30–87 (LPEPTNLPEPTKLPEPVEGPYKPKPPILPEPIKDNYKPKTPILPEHVEGPYKPKLPEP) are 5 X 4 AA repeats of L-P-E-P. The segment at 46–87 (VEGPYKPKPPILPEPIKDNYKPKTPILPEHVEGPYKPKLPEP) is 2 X 4 AA repeats of V-E-G-P. Positions 50–83 (YKPKPPILPEPIKDNYKPKTPILPEHVEGPYKPK) are 3 X 4 AA repeats of Y-K-P-K. Residues 74 to 84 (EHVEGPYKPKL) are compositionally biased toward basic and acidic residues. Residue asparagine 94 is glycosylated (N-linked (GlcNAc...) asparagine). The LysM 1 domain occupies 108-152 (KTHKVKSGESLTTIAEKYDTGICNIAKLNNLADPNFVDLNQDLQI). A glycan (N-linked (GlcNAc...) asparagine) is linked at asparagine 161. One can recognise a LysM 2 domain in the interval 183–227 (DIYSVVSGDTLTSIAQALQITLQSLKDANPGVVPEHLNVGQKLNV).

As to quaternary structure, forms a multimeric structure. N-glycosylated and may be O-glycosylated. Expressed in penetration hyphae, infection vesicles and primary hyphae (intracellular hyphae).

The protein localises to the secreted. It is found in the cell wall. Functionally, may have roles in host-pathogen interaction, including establishment and maintenance of biotrophy, prevention of host recognition of the fungus and a barrier to host defense molecules. This is Intracellular hyphae protein 1 (CIH1) from Colletotrichum lindemuthianum (Bean anthracnose fungus).